The sequence spans 292 residues: Elongation factor Ts (292 aa).

The tract at residues 80–83 (TDFV) is involved in Mg(2+) ion dislocation from EF-Tu.

This sequence belongs to the EF-Ts family.

It localises to the cytoplasm. Functionally, associates with the EF-Tu.GDP complex and induces the exchange of GDP to GTP. It remains bound to the aminoacyl-tRNA.EF-Tu.GTP complex up to the GTP hydrolysis stage on the ribosome. The chain is Elongation factor Ts from Cupriavidus pinatubonensis (strain JMP 134 / LMG 1197) (Cupriavidus necator (strain JMP 134)).